We begin with the raw amino-acid sequence, 322 residues long: tRNA-dihydrouridine(16) synthase (322 aa).

Residues 8-10 (PME) and Q69 each bind FMN. Catalysis depends on C99, which acts as the Proton donor. FMN contacts are provided by residues K140, 200-202 (NGD), and 224-225 (GR).

This sequence belongs to the Dus family. DusC subfamily. It depends on FMN as a cofactor.

The enzyme catalyses 5,6-dihydrouridine(16) in tRNA + NADP(+) = uridine(16) in tRNA + NADPH + H(+). It carries out the reaction 5,6-dihydrouridine(16) in tRNA + NAD(+) = uridine(16) in tRNA + NADH + H(+). In terms of biological role, catalyzes the synthesis of 5,6-dihydrouridine (D), a modified base found in the D-loop of most tRNAs, via the reduction of the C5-C6 double bond in target uridines. Specifically modifies U16 in tRNAs. The chain is tRNA-dihydrouridine(16) synthase from Cupriavidus necator (strain ATCC 17699 / DSM 428 / KCTC 22496 / NCIMB 10442 / H16 / Stanier 337) (Ralstonia eutropha).